Here is a 140-residue protein sequence, read N- to C-terminus: ATP synthase epsilon chain (140 aa).

Belongs to the ATPase epsilon chain family. In terms of assembly, F-type ATPases have 2 components, CF(1) - the catalytic core - and CF(0) - the membrane proton channel. CF(1) has five subunits: alpha(3), beta(3), gamma(1), delta(1), epsilon(1). CF(0) has three main subunits: a, b and c.

Its subcellular location is the cell inner membrane. In terms of biological role, produces ATP from ADP in the presence of a proton gradient across the membrane. The sequence is that of ATP synthase epsilon chain from Colwellia psychrerythraea (strain 34H / ATCC BAA-681) (Vibrio psychroerythus).